A 590-amino-acid chain; its full sequence is DNA mismatch repair protein MutL (590 aa).

The protein belongs to the DNA mismatch repair MutL/HexB family.

This protein is involved in the repair of mismatches in DNA. It is required for dam-dependent methyl-directed DNA mismatch repair. May act as a 'molecular matchmaker', a protein that promotes the formation of a stable complex between two or more DNA-binding proteins in an ATP-dependent manner without itself being part of a final effector complex. The chain is DNA mismatch repair protein MutL from Caldanaerobacter subterraneus subsp. tengcongensis (strain DSM 15242 / JCM 11007 / NBRC 100824 / MB4) (Thermoanaerobacter tengcongensis).